The primary structure comprises 304 residues: Ribosomal RNA small subunit methyltransferase H (304 aa).

Residues 36-38, Asp53, Phe79, Asp98, and Gln105 each bind S-adenosyl-L-methionine; that span reads GGH.

The protein belongs to the methyltransferase superfamily. RsmH family.

The protein resides in the cytoplasm. The enzyme catalyses cytidine(1402) in 16S rRNA + S-adenosyl-L-methionine = N(4)-methylcytidine(1402) in 16S rRNA + S-adenosyl-L-homocysteine + H(+). Specifically methylates the N4 position of cytidine in position 1402 (C1402) of 16S rRNA. This chain is Ribosomal RNA small subunit methyltransferase H, found in Myxococcus xanthus (strain DK1622).